We begin with the raw amino-acid sequence, 433 residues long: MTDFFAGIPQIRYEGEGSSNEFAFRHYNPDEVILGKRMEDHLRFAVAWWHSFAWPGGDPFGGQTFDRPWFGDTLDLAKLKADVAFEMFDILGAPFFCFHDADIRPEGATFAESKRNLEEIVDHIGTRMEGSKTKLLWGTANLFSHRRFMSGAATNPDPDVFAWSAATVKGCMDATMKLGGANYVLWGGREGYETLLNTDLTREAENAGRFLQMVVDYKHKIGFQGTILIEPKPQEPSKHQYDYDVATVYGFLKRFGLEKEVKLNIEQGHAILAGHSFEHELALAASLGILGSIDMNRNDYQSGWDTDQFPHNHPEMALAYYEILRAGGFTTGGTNFDAKIRRQSLDPEDLVLAHVGGMDTCARALKAAARLYEDGSLETARAARYAGWETPEAQAMLASSLEEIEARVLAEGINPKPRSGRQERLENLWNRFV.

Asp305 and Asp307 together coordinate Mg(2+).

It belongs to the xylose isomerase family. Homotetramer. It depends on Mg(2+) as a cofactor.

It localises to the cytoplasm. It carries out the reaction alpha-D-xylose = alpha-D-xylulofuranose. This Cereibacter sphaeroides (strain KD131 / KCTC 12085) (Rhodobacter sphaeroides) protein is Xylose isomerase.